A 184-amino-acid polypeptide reads, in one-letter code: Cobalamin adenosyltransferase (184 aa).

Positions 1–21 are disordered; sequence MGNRLSKIATRTGDAGTTGLG. Residues 10–13, 18–19, Lys28, 130–134, and Asn154 each bind ATP; these read TRTG, TG, and RRAER.

The protein belongs to the Cob(I)alamin adenosyltransferase family. As to quaternary structure, homotrimer.

The catalysed reaction is 2 cob(II)alamin + AH2 + 2 ATP = 2 adenosylcob(III)alamin + 2 triphosphate + A + 2 H(+). With respect to regulation, is potentially allosterically regulated by GTP/GDP, which enhances its affinity for AdoCbl by 5-fold. Binds cob(II)alamin weakly in the absence of ATP. The presence of ATP (but not GTP or GDP) increases the affinity of cob(II)alamin for the enzyme, and stoichiometric binding is observed. GTP blocks the transfer of cob(II)alamin to IcmF from ATR, thus averting its reconstitution with inactive cofactor. Functionally, adenosyltransferase that catalyzes the conversion of cob(II)alamin to adenosylcob(III)alamin (AdoCbl) in the presence of ATP and an electron donor. Acts as an accessory protein of IcmF that functions in cofactor repair, since IcmF is prone to inactivation during catalytic turnover due to the occasional loss of the 5'-deoxyadenosine moiety and formation of the inactive cob(II)alamin cofactor in its active site. Thus, receives and repairs the inactive cofactor, which is then reloaded onto IcmF in a GTPase-gated step. The protein is Cobalamin adenosyltransferase of Cupriavidus metallidurans (strain ATCC 43123 / DSM 2839 / NBRC 102507 / CH34) (Ralstonia metallidurans).